An 85-amino-acid chain; its full sequence is Large ribosomal subunit protein bL27 (85 aa).

Residues 1–22 are disordered; that stretch reads MAHKKAGGSTRNGRDSESKRLG.

The protein belongs to the bacterial ribosomal protein bL27 family.

This chain is Large ribosomal subunit protein bL27, found in Aliivibrio fischeri (strain ATCC 700601 / ES114) (Vibrio fischeri).